Here is a 37-residue protein sequence, read N- to C-terminus: Esculentin-2A (37 aa).

Residues Cys31 and Cys37 are joined by a disulfide bond.

It belongs to the frog skin active peptide (FSAP) family. Esculentin subfamily. In terms of tissue distribution, expressed by the skin glands.

The protein localises to the secreted. Functionally, shows antibacterial activity against representative Gram-negative and Gram-positive bacterial species, and hemolytic activity. The chain is Esculentin-2A from Pelophylax lessonae (Pool frog).